The following is a 130-amino-acid chain: Protein TraH (130 aa).

Residues 1–78 (MSEPKDQSIE…ALEENRRPKA (78 aa)) form a disordered region. Positions 37–54 (PEQATAGQPPAEATAPTP) are enriched in low complexity.

Functionally, the initiation process of transfer DNA synthesis requires the interaction of at least three plasmid-specific components (TraH, TraI, and TraJ) at the transfer origin resulting in the assembly of a specialized nucleoprotein complex - the relaxosome. The polypeptide is Protein TraH (traH) (Escherichia coli).